Consider the following 304-residue polypeptide: Capsid protein (304 aa).

Basic and acidic residues-rich tracts occupy residues 1 to 24 (MGDSTKKAETAKDVGTSQEKREAR) and 32 to 54 (FEGKDTSEDTDGRAADADGEMSL). Residues 1–54 (MGDSTKKAETAKDVGTSQEKREARPLPTAADFEGKDTSEDTDGRAADADGEMSL) are disordered.

Belongs to the potexviruses coat protein family.

The protein resides in the virion. Required for genome encapsidation. Forms ribonucleoprotein complexes along with TGB1 helicase and viral RNA. The sequence is that of Capsid protein from Potato virus M (strain German) (PVM).